We begin with the raw amino-acid sequence, 743 residues long: Elongation factor 2 (743 aa).

The tr-type G domain occupies 19–265 (NNIRNIGIIA…MVVRHLPSPK (247 aa)). Residues 28–35 (AHIHHGKT), 94–98 (DTPGH), and 148–151 (NKVD) contribute to the GTP site. Diphthamide is present on His-615.

It belongs to the TRAFAC class translation factor GTPase superfamily. Classic translation factor GTPase family. EF-G/EF-2 subfamily.

The protein localises to the cytoplasm. Catalyzes the GTP-dependent ribosomal translocation step during translation elongation. During this step, the ribosome changes from the pre-translocational (PRE) to the post-translocational (POST) state as the newly formed A-site-bound peptidyl-tRNA and P-site-bound deacylated tRNA move to the P and E sites, respectively. Catalyzes the coordinated movement of the two tRNA molecules, the mRNA and conformational changes in the ribosome. The chain is Elongation factor 2 from Nanoarchaeum equitans (strain Kin4-M).